Here is a 128-residue protein sequence, read N- to C-terminus: Large ribosomal subunit protein eL22 (128 aa).

Threonine 62 is modified (phosphothreonine). Position 66 is a phosphoserine (serine 66). Position 69 is an N6-succinyllysine (lysine 69).

The protein belongs to the eukaryotic ribosomal protein eL22 family. In terms of assembly, component of the large ribosomal subunit.

The protein localises to the cytoplasm. Functionally, component of the large ribosomal subunit. The ribosome is a large ribonucleoprotein complex responsible for the synthesis of proteins in the cell. The polypeptide is Large ribosomal subunit protein eL22 (RPL22) (Oryctolagus cuniculus (Rabbit)).